Here is a 466-residue protein sequence, read N- to C-terminus: Argininosuccinate lyase (466 aa).

It belongs to the lyase 1 family. Argininosuccinate lyase subfamily.

It localises to the cytoplasm. The catalysed reaction is 2-(N(omega)-L-arginino)succinate = fumarate + L-arginine. It participates in amino-acid biosynthesis; L-arginine biosynthesis; L-arginine from L-ornithine and carbamoyl phosphate: step 3/3. This chain is Argininosuccinate lyase, found in Desulfovibrio desulfuricans (strain ATCC 27774 / DSM 6949 / MB).